A 382-amino-acid chain; its full sequence is Probable protein phosphatase 2C 65 (382 aa).

Residues 47–337 (HVSMSIKQGK…DDCAVVVLYL (291 aa)) form the PPM-type phosphatase domain. Mn(2+)-binding residues include Asp-83 and Gly-84. A disordered region spans residues 107 to 126 (KIRSSKSAGDENIENNSSQS). Positions 282 and 328 each coordinate Mn(2+).

It belongs to the PP2C family. The cofactor is Mg(2+). It depends on Mn(2+) as a cofactor.

The enzyme catalyses O-phospho-L-seryl-[protein] + H2O = L-seryl-[protein] + phosphate. The catalysed reaction is O-phospho-L-threonyl-[protein] + H2O = L-threonyl-[protein] + phosphate. This chain is Probable protein phosphatase 2C 65, found in Arabidopsis thaliana (Mouse-ear cress).